Reading from the N-terminus, the 779-residue chain is Endonuclease MutS2 (779 aa).

ATP is bound at residue 328-335; it reads GPNTGGKT. Positions 704–779 constitute a Smr domain; the sequence is LDLRGKRYEE…GSGATIVTLG (76 aa).

It belongs to the DNA mismatch repair MutS family. MutS2 subfamily. In terms of assembly, homodimer. Binds to stalled ribosomes, contacting rRNA.

In terms of biological role, endonuclease that is involved in the suppression of homologous recombination and thus may have a key role in the control of bacterial genetic diversity. Acts as a ribosome collision sensor, splitting the ribosome into its 2 subunits. Detects stalled/collided 70S ribosomes which it binds and splits by an ATP-hydrolysis driven conformational change. Acts upstream of the ribosome quality control system (RQC), a ribosome-associated complex that mediates the extraction of incompletely synthesized nascent chains from stalled ribosomes and their subsequent degradation. Probably generates substrates for RQC. This chain is Endonuclease MutS2, found in Streptococcus agalactiae serotype Ia (strain ATCC 27591 / A909 / CDC SS700).